The sequence spans 432 residues: tRNA(Ile)-lysidine synthase (432 aa).

Residue 20 to 25 (SGGLDS) participates in ATP binding.

Belongs to the tRNA(Ile)-lysidine synthase family.

It localises to the cytoplasm. The enzyme catalyses cytidine(34) in tRNA(Ile2) + L-lysine + ATP = lysidine(34) in tRNA(Ile2) + AMP + diphosphate + H(+). Ligates lysine onto the cytidine present at position 34 of the AUA codon-specific tRNA(Ile) that contains the anticodon CAU, in an ATP-dependent manner. Cytidine is converted to lysidine, thus changing the amino acid specificity of the tRNA from methionine to isoleucine. The chain is tRNA(Ile)-lysidine synthase from Shigella flexneri.